Here is a 55-residue protein sequence, read N- to C-terminus: Large ribosomal subunit protein bL33 (55 aa).

The segment covering 1 to 11 (MAKGGREKIKL) has biased composition (basic and acidic residues). Residues 1 to 29 (MAKGGREKIKLESSAGTGHFYTTSKNKRT) are disordered. Polar residues predominate over residues 14-24 (SAGTGHFYTTS).

It belongs to the bacterial ribosomal protein bL33 family.

This chain is Large ribosomal subunit protein bL33, found in Polynucleobacter asymbioticus (strain DSM 18221 / CIP 109841 / QLW-P1DMWA-1) (Polynucleobacter necessarius subsp. asymbioticus).